The primary structure comprises 225 residues: UPF0758 protein SZO_09140 (225 aa).

The region spanning 102-224 is the MPN domain; that stretch reads PVLSSAQVAE…YYSFREKSDL (123 aa). His-173, His-175, and Asp-186 together coordinate Zn(2+). The short motif at 173–186 is the JAMM motif element; the sequence is HNHPSGLTKPSAND.

Belongs to the UPF0758 family.

The protein is UPF0758 protein SZO_09140 of Streptococcus equi subsp. zooepidemicus (strain H70).